Consider the following 233-residue polypeptide: Ras-related protein RabV (233 aa).

Residue 15–22 (GEKEVGKS) coordinates GTP. Positions 37-45 (YIPTIGIDF) match the Effector region motif. GTP-binding positions include 63–67 (DYVSH) and 122–125 (TKSD). The disordered stretch occupies residues 143–182 (QNNNNNNNNNNNNNNNNNNNNNNNNNNNNNSNNNNNNNLQ). Over residues 144-180 (NNNNNNNNNNNNNNNNNNNNNNNNNNNNNSNNNNNNN) the composition is skewed to low complexity.

The protein belongs to the small GTPase superfamily. Rab family.

In Dictyostelium discoideum (Social amoeba), this protein is Ras-related protein RabV (rabV).